Reading from the N-terminus, the 161-residue chain is Cell division protein SepF (161 aa).

The protein belongs to the SepF family. As to quaternary structure, homodimer. Interacts with FtsZ.

It is found in the cytoplasm. Its function is as follows. Cell division protein that is part of the divisome complex and is recruited early to the Z-ring. Probably stimulates Z-ring formation, perhaps through the cross-linking of FtsZ protofilaments. Its function overlaps with FtsA. This is Cell division protein SepF from Finegoldia magna (strain ATCC 29328 / DSM 20472 / WAL 2508) (Peptostreptococcus magnus).